The sequence spans 379 residues: Chaperone protein DnaJ (379 aa).

Residues 5–70 enclose the J domain; sequence DYYEVLGVQK…QKRAAYDRFG (66 aa). The CR-type zinc finger occupies 137-215; the sequence is GATTTVRVPT…CGGQGRVRKE (79 aa). Zn(2+) contacts are provided by C150, C153, C167, C170, C189, C192, C203, and C206. CXXCXGXG motif repeat units lie at residues 150 to 157, 167 to 174, 189 to 196, and 203 to 210; these read CESCNGTG, CPTCNGHG, CPACHGVG, and CRTCGGQG.

This sequence belongs to the DnaJ family. In terms of assembly, homodimer. Zn(2+) serves as cofactor.

It localises to the cytoplasm. Its function is as follows. Participates actively in the response to hyperosmotic and heat shock by preventing the aggregation of stress-denatured proteins and by disaggregating proteins, also in an autonomous, DnaK-independent fashion. Unfolded proteins bind initially to DnaJ; upon interaction with the DnaJ-bound protein, DnaK hydrolyzes its bound ATP, resulting in the formation of a stable complex. GrpE releases ADP from DnaK; ATP binding to DnaK triggers the release of the substrate protein, thus completing the reaction cycle. Several rounds of ATP-dependent interactions between DnaJ, DnaK and GrpE are required for fully efficient folding. Also involved, together with DnaK and GrpE, in the DNA replication of plasmids through activation of initiation proteins. This Rhodospirillum centenum (strain ATCC 51521 / SW) protein is Chaperone protein DnaJ.